Consider the following 465-residue polypeptide: Glutamate--tRNA ligase (465 aa).

Residues 8–18 (PSPTGHLHIGG) carry the 'HIGH' region motif. 4 residues coordinate Zn(2+): Cys97, Cys99, Cys124, and Glu126. Residues 234 to 238 (RLSKR) carry the 'KMSKS' region motif. Lys237 contributes to the ATP binding site.

Belongs to the class-I aminoacyl-tRNA synthetase family. Glutamate--tRNA ligase type 1 subfamily. As to quaternary structure, monomer. The cofactor is Zn(2+).

The protein resides in the cytoplasm. The enzyme catalyses tRNA(Glu) + L-glutamate + ATP = L-glutamyl-tRNA(Glu) + AMP + diphosphate. In terms of biological role, catalyzes the attachment of glutamate to tRNA(Glu) in a two-step reaction: glutamate is first activated by ATP to form Glu-AMP and then transferred to the acceptor end of tRNA(Glu). The sequence is that of Glutamate--tRNA ligase from Thermodesulfovibrio yellowstonii (strain ATCC 51303 / DSM 11347 / YP87).